Here is a 310-residue protein sequence, read N- to C-terminus: Methionyl-tRNA formyltransferase (310 aa).

(6S)-5,6,7,8-tetrahydrofolate is bound at residue serine 109–proline 112.

Belongs to the Fmt family.

It carries out the reaction L-methionyl-tRNA(fMet) + (6R)-10-formyltetrahydrofolate = N-formyl-L-methionyl-tRNA(fMet) + (6S)-5,6,7,8-tetrahydrofolate + H(+). Attaches a formyl group to the free amino group of methionyl-tRNA(fMet). The formyl group appears to play a dual role in the initiator identity of N-formylmethionyl-tRNA by promoting its recognition by IF2 and preventing the misappropriation of this tRNA by the elongation apparatus. The chain is Methionyl-tRNA formyltransferase from Pseudomonas putida (strain ATCC 700007 / DSM 6899 / JCM 31910 / BCRC 17059 / LMG 24140 / F1).